Here is a 461-residue protein sequence, read N- to C-terminus: Asparagine--tRNA ligase (461 aa).

It belongs to the class-II aminoacyl-tRNA synthetase family. In terms of assembly, homodimer.

Its subcellular location is the cytoplasm. It catalyses the reaction tRNA(Asn) + L-asparagine + ATP = L-asparaginyl-tRNA(Asn) + AMP + diphosphate + H(+). This is Asparagine--tRNA ligase from Geotalea uraniireducens (strain Rf4) (Geobacter uraniireducens).